The primary structure comprises 372 residues: Alanine racemase (372 aa).

Lys-35 acts as the Proton acceptor; specific for D-alanine in catalysis. Residue Lys-35 is modified to N6-(pyridoxal phosphate)lysine. A substrate-binding site is contributed by Arg-143. Tyr-268 (proton acceptor; specific for L-alanine) is an active-site residue. Met-316 is a binding site for substrate.

It belongs to the alanine racemase family. Requires pyridoxal 5'-phosphate as cofactor.

The catalysed reaction is L-alanine = D-alanine. The protein operates within amino-acid biosynthesis; D-alanine biosynthesis; D-alanine from L-alanine: step 1/1. Its function is as follows. Catalyzes the interconversion of L-alanine and D-alanine. May also act on other amino acids. The sequence is that of Alanine racemase (alr) from Shewanella frigidimarina (strain NCIMB 400).